Consider the following 255-residue polypeptide: 5'-nucleotidase SurE (255 aa).

Residues Asp8, Asp9, Ser40, and Asn92 each coordinate a divalent metal cation.

It belongs to the SurE nucleotidase family. A divalent metal cation is required as a cofactor.

The protein resides in the cytoplasm. The catalysed reaction is a ribonucleoside 5'-phosphate + H2O = a ribonucleoside + phosphate. Its function is as follows. Nucleotidase that shows phosphatase activity on nucleoside 5'-monophosphates. The sequence is that of 5'-nucleotidase SurE from Brucella canis (strain ATCC 23365 / NCTC 10854 / RM-666).